A 121-amino-acid chain; its full sequence is Large ribosomal subunit protein bL19 (121 aa).

Belongs to the bacterial ribosomal protein bL19 family.

In terms of biological role, this protein is located at the 30S-50S ribosomal subunit interface and may play a role in the structure and function of the aminoacyl-tRNA binding site. In Porphyromonas gingivalis (strain ATCC BAA-308 / W83), this protein is Large ribosomal subunit protein bL19.